Consider the following 347-residue polypeptide: BSD domain-containing protein C22A12.14c (347 aa).

Residues Thr-123 and Thr-125 each carry the phosphothreonine modification. The region spanning 167–219 (WEKEISIDGKTEEISLLLEEYPDLRKQMESLVPSEVSYDDFWKRFFWHKEVVQ) is the BSD domain. The interval 229–347 (DEEEIFSWGD…DDDEDDDDWE (119 aa)) is disordered. 3 positions are modified to phosphoserine: Ser-235, Ser-241, and Ser-246. The span at 240-251 (RSDEEESDNEQV) shows a compositional bias: acidic residues. A compositionally biased stretch (basic and acidic residues) spans 297-312 (HDGEVDGEVKEEEENK). Over residues 313-325 (VSSSSNIEASQSS) the composition is skewed to low complexity. Residues 327–337 (EVKDEANRKVD) show a composition bias toward basic and acidic residues. Acidic residues predominate over residues 338-347 (DDDEDDDDWE).

The protein localises to the cytoplasm. This chain is BSD domain-containing protein C22A12.14c, found in Schizosaccharomyces pombe (strain 972 / ATCC 24843) (Fission yeast).